We begin with the raw amino-acid sequence, 554 residues long: CTP synthase (554 aa).

The tract at residues 1-265 (MTPLIFVTGG…DEIVIDQFKL (265 aa)) is amidoligase domain. S13 lines the CTP pocket. UTP is bound at residue S13. Residues 14 to 19 (SLGKGI) and D71 contribute to the ATP site. The Mg(2+) site is built by D71 and E139. Residues 146 to 148 (DIE), 186 to 191 (KTKPTQ), and K222 each bind CTP. UTP contacts are provided by residues 186-191 (KTKPTQ) and K222. Positions 292–545 (TIAVVGKYVD…VKAARARKAG (254 aa)) constitute a Glutamine amidotransferase type-1 domain. G353 contacts L-glutamine. C380 acts as the Nucleophile; for glutamine hydrolysis in catalysis. Residues 381–384 (YGMQ), E404, and R471 each bind L-glutamine. Residues H518 and E520 contribute to the active site.

The protein belongs to the CTP synthase family. In terms of assembly, homotetramer.

The enzyme catalyses UTP + L-glutamine + ATP + H2O = CTP + L-glutamate + ADP + phosphate + 2 H(+). The catalysed reaction is L-glutamine + H2O = L-glutamate + NH4(+). It carries out the reaction UTP + NH4(+) + ATP = CTP + ADP + phosphate + 2 H(+). Its pathway is pyrimidine metabolism; CTP biosynthesis via de novo pathway; CTP from UDP: step 2/2. With respect to regulation, allosterically activated by GTP, when glutamine is the substrate; GTP has no effect on the reaction when ammonia is the substrate. The allosteric effector GTP functions by stabilizing the protein conformation that binds the tetrahedral intermediate(s) formed during glutamine hydrolysis. Inhibited by the product CTP, via allosteric rather than competitive inhibition. Catalyzes the ATP-dependent amination of UTP to CTP with either L-glutamine or ammonia as the source of nitrogen. Regulates intracellular CTP levels through interactions with the four ribonucleotide triphosphates. The sequence is that of CTP synthase from Xylella fastidiosa (strain 9a5c).